The primary structure comprises 304 residues: Quinolinate synthase (304 aa).

Iminosuccinate is bound by residues His-23 and Ser-40. Residue Cys-85 coordinates [4Fe-4S] cluster. Iminosuccinate contacts are provided by residues 111–113 (YVN) and Ser-128. Cys-171 contacts [4Fe-4S] cluster. Residues 197–199 (HPE) and Thr-214 each bind iminosuccinate. Cys-259 is a binding site for [4Fe-4S] cluster.

It belongs to the quinolinate synthase family. Type 2 subfamily. [4Fe-4S] cluster serves as cofactor.

Its subcellular location is the cytoplasm. It carries out the reaction iminosuccinate + dihydroxyacetone phosphate = quinolinate + phosphate + 2 H2O + H(+). It functions in the pathway cofactor biosynthesis; NAD(+) biosynthesis; quinolinate from iminoaspartate: step 1/1. Functionally, catalyzes the condensation of iminoaspartate with dihydroxyacetone phosphate to form quinolinate. This Pelobacter propionicus (strain DSM 2379 / NBRC 103807 / OttBd1) protein is Quinolinate synthase.